The following is a 306-amino-acid chain: High osmolarity signaling protein MOS1 (306 aa).

The Cytoplasmic segment spans residues M1–F23. Residues A24–I44 traverse the membrane as a helical segment. Residues A45–P67 are Extracellular-facing. Residues F68–A88 form a helical membrane-spanning segment. At S89–H96 the chain is on the cytoplasmic side. The helical transmembrane segment at V97 to L117 threads the bilayer. Residues V118 to E126 are Extracellular-facing. A helical transmembrane segment spans residues A127 to G147. Over S148 to L306 the chain is Cytoplasmic. The tract at residues F204 to L242 is disordered. A compositionally biased stretch (polar residues) spans T224 to K235. One can recognise an SH3 domain in the interval D246–L306.

Belongs to the SHO1 family. In terms of assembly, forms homooligomers.

The protein resides in the cell membrane. Functionally, plasma membrane osmosensor that activates the high osmolarity glycerol (HOG) MAPK signaling pathway in response to high osmolarity. Affects fungal virulence. The polypeptide is High osmolarity signaling protein MOS1 (MOS1) (Metarhizium robertsii (strain ARSEF 23 / ATCC MYA-3075) (Metarhizium anisopliae (strain ARSEF 23))).